The primary structure comprises 854 residues: Protein mono-ADP-ribosyltransferase PARP9 (854 aa).

Macro domains lie at 107-296 and 306-487; these read LQVF…EFIL and TPSF…AKRS. Residues 628–850 form the PARP catalytic domain; that stretch reads IQQQKTQDEM…QHPWRGFASG (223 aa).

The protein belongs to the ARTD/PARP family. As to quaternary structure, forms a stable complex with E3 ligase DTX3L; the interaction is required for PARP9 mediated ADP-ribosylation of ubiquitin. Interacts (via PARP catalytic domain) with DTX3L (via N-terminus). Forms a complex with STAT1 and DTX3L independently of IFNB1 or IFNG-mediated STAT1 'Tyr-701' phosphorylation. Forms a complex with STAT1, DTX3L and histone H2B H2BC9/H2BJ; the interaction is likely to induce H2BC9/H2BJ ubiquitination. Interacts (via N-terminus) with STAT1. Interacts with PARP14 in IFNG-stimulated macrophages; the interaction prevents PARP14-mediated STAT1 and STAT6 ADP-riboslylation. Interacts with PARP1 (when poly-ADP-ribosylated). Post-translationally, ADP-ribosylated by PARP14. As to expression, expressed in lymphocyte-rich tissues, spleen, lymph nodes, peripheral blood lymphocytes and colonic mucosa. Expressed in macrophages. Also expressed in nonhematopoietic tissues such as heart and skeletal muscle. Isoform 2 is the predominant form. Most abundantly expressed in lymphomas with a brisk host inflammatory response. In diffuse large B-cell lymphomas tumors, expressed specifically by malignant B-cells.

The protein localises to the cytoplasm. Its subcellular location is the cytosol. It is found in the nucleus. It carries out the reaction [protein]-C-terminal glycine + NAD(+) = [protein]-C-terminal O-(ADP-D-ribosyl)-glycine + nicotinamide. With respect to regulation, binding to poly(ADP-ribose) does not affect its activity. Its function is as follows. ADP-ribosyltransferase which, in association with E3 ligase DTX3L, plays a role in DNA damage repair and in immune responses including interferon-mediated antiviral defenses. Within the complex, enhances DTX3L E3 ligase activity which is further enhanced by PARP9 binding to poly(ADP-ribose). In association with DTX3L and in presence of E1 and E2 enzymes, mediates NAD(+)-dependent mono-ADP-ribosylation of ubiquitin which prevents ubiquitin conjugation to substrates such as histones. During DNA repair, PARP1 recruits PARP9/BAL1-DTX3L complex to DNA damage sites via PARP9 binding to ribosylated PARP1. Subsequent PARP1-dependent PARP9/BAL1-DTX3L-mediated ubiquitination promotes the rapid and specific recruitment of 53BP1/TP53BP1, UIMC1/RAP80, and BRCA1 to DNA damage sites. In response to DNA damage, PARP9-DTX3L complex is required for efficient non-homologous end joining (NHEJ); the complex function is negatively modulated by PARP9 activity. Dispensable for B-cell receptor (BCR) assembly through V(D)J recombination and class switch recombination (CSR). In macrophages, positively regulates pro-inflammatory cytokines production in response to IFNG stimulation by suppressing PARP14-mediated STAT1 ADP-ribosylation and thus promoting STAT1 phosphorylation. Also suppresses PARP14-mediated STAT6 ADP-ribosylation. This Homo sapiens (Human) protein is Protein mono-ADP-ribosyltransferase PARP9 (PARP9).